A 124-amino-acid polypeptide reads, in one-letter code: Large ribosomal subunit protein bL12 (124 aa).

The protein belongs to the bacterial ribosomal protein bL12 family. In terms of assembly, homodimer. Part of the ribosomal stalk of the 50S ribosomal subunit. Forms a multimeric L10(L12)X complex, where L10 forms an elongated spine to which 2 to 4 L12 dimers bind in a sequential fashion. Binds GTP-bound translation factors.

Functionally, forms part of the ribosomal stalk which helps the ribosome interact with GTP-bound translation factors. Is thus essential for accurate translation. This chain is Large ribosomal subunit protein bL12, found in Burkholderia mallei (strain NCTC 10247).